We begin with the raw amino-acid sequence, 451 residues long: Chromosomal replication initiator protein DnaA (451 aa).

The tract at residues 1 to 77 (MTENEQIFWN…EVYNAQISVD (77 aa)) is domain I, interacts with DnaA modulators. The domain II stretch occupies residues 77–110 (DYVFEEDLMIEQNQTKINQKPKQQALNSLPTVTS). The tract at residues 111 to 329 (DLNPKYSFEN…GALKDISLVA (219 aa)) is domain III, AAA+ region. ATP contacts are provided by Gly-155, Gly-157, Lys-158, and Thr-159. The tract at residues 330-451 (NFKQIDTITV…EIETIKNKIK (122 aa)) is domain IV, binds dsDNA.

This sequence belongs to the DnaA family. In terms of assembly, oligomerizes as a right-handed, spiral filament on DNA at oriC.

The protein resides in the cytoplasm. Its function is as follows. Plays an essential role in the initiation and regulation of chromosomal replication. ATP-DnaA binds to the origin of replication (oriC) to initiate formation of the DNA replication initiation complex once per cell cycle. Binds the DnaA box (a 9 base pair repeat at the origin) and separates the double-stranded (ds)DNA. Forms a right-handed helical filament on oriC DNA; dsDNA binds to the exterior of the filament while single-stranded (ss)DNA is stabiized in the filament's interior. The ATP-DnaA-oriC complex binds and stabilizes one strand of the AT-rich DNA unwinding element (DUE), permitting loading of DNA polymerase. After initiation quickly degrades to an ADP-DnaA complex that is not apt for DNA replication. Binds acidic phospholipids. In Streptococcus pyogenes serotype M4 (strain MGAS10750), this protein is Chromosomal replication initiator protein DnaA.